The sequence spans 692 residues: Sulfhydryl oxidase 2 (692 aa).

A signal peptide spans 1–38 (MAAARAVARDPGAYARQPPSLRAARLPRLLFLLAVVAA). Residues 54–172 (SDAVWLLDSG…RQTMIDFLQN (119 aa)) enclose the Thioredoxin domain. N71 carries N-linked (GlcNAc...) asparagine glycosylation. Catalysis depends on nucleophile residues C85 and C88. 2 disulfide bridges follow: C85–C88 and C116–C125. 3 N-linked (GlcNAc...) asparagine glycosylation sites follow: N172, N212, and N260. Cysteines 412 and 424 form a disulfide. An ERV/ALR sulfhydryl oxidase domain is found at 415 to 524 (SRLELRGYPC…EDPKFPKVPW (110 aa)). FAD-binding positions include R420, W427, H431, E472, H476, 499 to 506 (WRKHNMVN), K521, and W524. C470 and C473 are disulfide-bonded. The cysteines at positions 530 and 533 are disulfide-linked. A disordered region spans residues 568–607 (DQGSPGEWEAQGREQEEGKGLNPSGKSWRHHDTGSLRPPH). The segment covering 577–586 (AQGREQEEGK) has biased composition (basic and acidic residues). The chain crosses the membrane as a helical span at residues 656-676 (SLCVVLYVASSLFLMIMYFFF).

This sequence belongs to the quiescin-sulfhydryl oxidase (QSOX) family. FAD serves as cofactor.

It is found in the membrane. It carries out the reaction 2 R'C(R)SH + O2 = R'C(R)S-S(R)CR' + H2O2. Functionally, catalyzes the oxidation of sulfhydryl groups in peptide and protein thiols to disulfides with the reduction of oxygen to hydrogen peroxide. May contribute to disulfide bond formation in a variety of secreted proteins. In Mus musculus (Mouse), this protein is Sulfhydryl oxidase 2 (Qsox2).